A 1135-amino-acid chain; its full sequence is Large proline-rich protein bag6-A (1135 aa).

In terms of domain architecture, Ubiquitin-like spans Met-7–Thr-82. 8 disordered regions span residues Glu-76 to Asn-114, Glu-194 to Glu-238, Thr-350 to Arg-407, Ser-498 to Ala-522, Gln-552 to Ser-612, Pro-661 to Pro-698, Lys-1075 to Gly-1099, and Asn-1116 to Pro-1135. Residues Pro-79–Ser-100 show a composition bias toward low complexity. The segment covering Arg-212 to Asn-227 has biased composition (polar residues). Residues Thr-228 to Ser-237 are compositionally biased toward low complexity. Residues Gln-367–Ser-387 show a composition bias toward polar residues. Low complexity-rich tracts occupy residues Ser-555–Ser-600 and Ser-663–Gln-672. The span at Ala-673–Ala-692 shows a compositional bias: pro residues. A compositionally biased stretch (basic and acidic residues) spans Cys-1087 to Gly-1099. The span at Asn-1116 to Arg-1129 shows a compositional bias: polar residues.

As to quaternary structure, component of the bag6/bat3 complex.

The protein localises to the cytoplasm. It localises to the cytosol. Its subcellular location is the nucleus. The protein resides in the secreted. It is found in the extracellular exosome. In terms of biological role, ATP-independent molecular chaperone preventing the aggregation of misfolded and hydrophobic patches-containing proteins. Functions as part of a cytosolic protein quality control complex, the bag6/bat3 complex, which maintains these client proteins in a soluble state and participates in their proper delivery to the endoplasmic reticulum or alternatively can promote their sorting to the proteasome where they undergo degradation. The bag6/bat3 complex is involved in the post-translational delivery of tail-anchored/type II transmembrane proteins to the endoplasmic reticulum membrane. Similarly, the bag6/bat3 complex also functions as a sorting platform for proteins of the secretory pathway that are mislocalized to the cytosol either delivering them to the proteasome for degradation or to the endoplasmic reticulum. The bag6/bat3 complex also plays a role in the endoplasmic reticulum-associated degradation (ERAD), a quality control mechanism that eliminates unwanted proteins of the endoplasmic reticulum through their retrotranslocation to the cytosol and their targeting to the proteasome. It maintains these retrotranslocated proteins in an unfolded yet soluble state condition in the cytosol to ensure their proper delivery to the proteasome. Also required for selective ubiquitin-mediated degradation of defective nascent chain polypeptides by the proteasome. Also involved in endoplasmic reticulum stress-induced pre-emptive quality control, a mechanism that selectively attenuates the translocation of newly synthesized proteins into the endoplasmic reticulum and reroutes them to the cytosol for proteasomal degradation. May ensure the proper degradation of these proteins and thereby protects the endoplasmic reticulum from protein overload upon stress. By stabilizing a large spectrum of proteins, may indirectly affect different biological processes including apoptosis. By controlling the steady-state expression of the IGF1R receptor, indirectly regulates the insulin-like growth factor receptor signaling pathway. Its function is as follows. When nuclear, may also act as a component of some chromatin regulator complex. The sequence is that of Large proline-rich protein bag6-A from Xenopus laevis (African clawed frog).